Here is a 299-residue protein sequence, read N- to C-terminus: Acetylglutamate kinase (299 aa).

Substrate contacts are provided by residues 72–73 (GG), Arg-94, and Asn-196.

This sequence belongs to the acetylglutamate kinase family. ArgB subfamily.

The protein localises to the cytoplasm. The enzyme catalyses N-acetyl-L-glutamate + ATP = N-acetyl-L-glutamyl 5-phosphate + ADP. The protein operates within amino-acid biosynthesis; L-arginine biosynthesis; N(2)-acetyl-L-ornithine from L-glutamate: step 2/4. Catalyzes the ATP-dependent phosphorylation of N-acetyl-L-glutamate. The sequence is that of Acetylglutamate kinase from Paraburkholderia phymatum (strain DSM 17167 / CIP 108236 / LMG 21445 / STM815) (Burkholderia phymatum).